We begin with the raw amino-acid sequence, 155 residues long: Peptide methionine sulfoxide reductase MsrB (155 aa).

Residues 15–137 (REALIATLNA…NSVSLTFIPT (123 aa)) enclose the MsrB domain. 4 residues coordinate Zn(2+): Cys54, Cys57, Cys103, and Cys106. Cys126 (nucleophile) is an active-site residue.

Belongs to the MsrB Met sulfoxide reductase family. Zn(2+) is required as a cofactor.

It catalyses the reaction L-methionyl-[protein] + [thioredoxin]-disulfide + H2O = L-methionyl-(R)-S-oxide-[protein] + [thioredoxin]-dithiol. This is Peptide methionine sulfoxide reductase MsrB from Xylella fastidiosa (strain 9a5c).